The following is a 475-amino-acid chain: MAASALRGPPVAGGGESSESEDDGWEIGYLDRTSQKLKGLLPIEEKKEKFKKAMTIGDVSLVQELLDSGISVDSTFQYGWTPLMYAASVANAELVRVLLDRGANASFEKDKQSILITACSAHGSEEQILKCVELLLSRNADPNVACRRLMTPIMYAARDGHTQVVALLVAHGAEVNTQDENGYTALTWAARQGHKNIVLKLLELGANKMLQTKDGKMPSEIAKRNKHHEIFNLLSFTLNPLEGRLQQLTKEDTICKILTTDSDREKDHIFSSYTAFGDLEVFLHGLGLEHMTDLLKERDITLRHLLTMREDEFTKNGITSKDQQKILAALKELQVEEIQFGELSEETKLEISGDEFLNFLLKLNKQCGHLITAVQNVITELPVNSQKITLEWASPQNFTSVCEELVNNVEDLSEKVCKLKDLIQKLQNERENDPTHIQLREEVSTWNSRILKRTAITICGFGFLLFICKLTFQRK.

The segment at 1-24 is disordered; that stretch reads MAASALRGPPVAGGGESSESEDDG. 3 positions are modified to phosphoserine: Ser17, Ser18, and Ser20. 6 ANK repeats span residues 45–74, 78–107, 110–144, 148–177, 181–210, and 214–243; these read EKKEKFKKAMTIGDVSLVQELLDSGISVDS, YGWTPLMYAASVANAELVRVLLDRGANASF, DKQSILITACSAHGSEEQILKCVELLLSRNADPNV, RLMTPIMYAARDGHTQVVALLVAHGAEVNT, NGYTALTWAARQGHKNIVLKLLELGANKML, and DGKMPSEIAKRNKHHEIFNLLSFTLNPLEG. Residues 272–334 form the SAM domain; it reads SYTAFGDLEV…KILAALKELQ (63 aa).

As to quaternary structure, interacts with DDX4, PIWIL1, RANBP9 and TDRD1.

The protein localises to the cytoplasm. Functionally, plays a central role during spermatogenesis by repressing transposable elements and preventing their mobilization, which is essential for the germline integrity. Acts via the piRNA metabolic process, which mediates the repression of transposable elements during meiosis by forming complexes composed of piRNAs and Piwi proteins and governs the methylation and subsequent repression of transposons. Its association with pi-bodies suggests a participation in the primary piRNAs metabolic process. Required prior to the pachytene stage to facilitate the production of multiple types of piRNAs, including those associated with repeats involved in the regulation of retrotransposons. May act by mediating protein-protein interactions during germ cell maturation. In Gorilla gorilla gorilla (Western lowland gorilla), this protein is Ankyrin repeat, SAM and basic leucine zipper domain-containing protein 1 (ASZ1).